Here is a 38-residue protein sequence, read N- to C-terminus: Large ribosomal subunit protein bL36 (38 aa).

Belongs to the bacterial ribosomal protein bL36 family.

The polypeptide is Large ribosomal subunit protein bL36 (Synechococcus sp. (strain JA-2-3B'a(2-13)) (Cyanobacteria bacterium Yellowstone B-Prime)).